Reading from the N-terminus, the 508-residue chain is MPGVVSWSQLVNPSYVAILPHLIVTATLLVVIVLDAYFKEKRSLVWVTLGGVVLAMLSIWYTASDPQIQAGIAAGRPPEFWGGMIIADGFTFFMNGVLLGIAALVILLSADYVGKFLRGAHMEFYEIILAVTLGMMFMVSSRDLLTIYIGLELTSISSYVLAGILRKDAKSNEAALKYFLTGATASAVLLFGLSLIYGVTGSTRLPEVAAALAGGSHVVAAAGPALTPLLVAGMAFLMVGFGFKVAAVPVHQWAPDVYEGAPTPVTAFFSAGPKGAAMAAILRVFVGGLGVAPFTDKWALIWALAAAASMTVGNLVALQQTNIKRMMAYSSIAQAGYILVGVAASGLQSVEGISSVLFYVMAYAVTNLGIFAVLTHMDQEGGWVEVDNYAGLAKRNPLYAWALLLFFVSLIGIPPTVGFLGKFFLFRAAAASGYLWLAVLMAVNSVISVGYYYRVVKVMFLDQSDYPALTPSTGISATVLLSLLGVVALTIFANPFVQWTAQSAALLH.

The next 14 membrane-spanning stretches (helical) occupy residues 14 to 34 (SYVA…VIVL), 43 to 63 (SLVW…WYTA), 90 to 110 (FTFF…LLSA), 119 to 139 (GAHM…MFMV), 144 to 164 (LLTI…LAGI), 179 to 199 (FLTG…IYGV), 223 to 243 (GPAL…GFGF), 275 to 295 (GAAM…APFT), 298 to 318 (WALI…LVAL), 327 to 347 (MAYS…ASGL), 353 to 373 (ISSV…IFAV), 400 to 420 (AWAL…VGFL), 433 to 455 (GYLW…YYRV), and 473 to 493 (TGIS…TIFA).

It belongs to the complex I subunit 2 family. In terms of assembly, NDH-1 is composed of 14 different subunits. Subunits NuoA, H, J, K, L, M, N constitute the membrane sector of the complex.

The protein localises to the cell membrane. It carries out the reaction a quinone + NADH + 5 H(+)(in) = a quinol + NAD(+) + 4 H(+)(out). In terms of biological role, NDH-1 shuttles electrons from NADH, via FMN and iron-sulfur (Fe-S) centers, to quinones in the respiratory chain. The immediate electron acceptor for the enzyme in this species is believed to be a menaquinone. Couples the redox reaction to proton translocation (for every two electrons transferred, four hydrogen ions are translocated across the cytoplasmic membrane), and thus conserves the redox energy in a proton gradient. The protein is NADH-quinone oxidoreductase subunit N 2 of Symbiobacterium thermophilum (strain DSM 24528 / JCM 14929 / IAM 14863 / T).